Consider the following 197-residue polypeptide: Protein RmlC homolog (197 aa).

The active-site Proton acceptor is His76. Residue Tyr140 is the Proton donor of the active site.

Functionally, could catalyze a 3,5-epimerization. The polypeptide is Protein RmlC homolog (rfbC) (Streptococcus pyogenes serotype M6 (strain ATCC BAA-946 / MGAS10394)).